The following is a 1633-amino-acid chain: MKKRRQGPINKRVDFLSNKVNKYSIRKFTVGTASILVGATLMFGAADNEAKAAEDNQLESASKEEQKGSRDNESSKLNQVDLDNGSHSSEKTTNVNNATEVKKVEAPTTSDVSKPKANEAVVTNESTKPKTTEAPTVNEESIAETPKTSTTQQDSTEKNNPSLKDNLNSSSTTSKESKTDEHSTKQAQMSTNKSNLDTNDSPTQSEKTSSQANNDSTDNQSAPSKQLDSKPSEQKVYKTKFNDEPTQDVEHTTTKLKTPSISTDSSVNDKQDYTRSAVASLGVDSNETEAITNAVRDNLDLKAASREQINEAIIAEALKKDFSNPDYGVDTPLALNTSQSKNSPHKSASPRMNLMSLAAEPNSGKNVNDKVKITNPTLSLNKSNNHANNVIWPTSNEQFNLKANYELDDSIKEGDTFTIKYGQYIRPGGLELPAIKTQLRSKDGSIVANGVYDKTTNTTTYTFTNYVDQYQNITGSFDLIATPKRETAIKDNQNYPMEVTIANEVVKKDFIVDYGNKKDNTTTAAVANVDNVNNKHNEVVYLNQNNQNPKYAKYFSTVKNGKFIPGEVKVYEVTDTNAMVDSFNPDLNSSNVKDVTSQFTPKVSADGTRVDINFARSMANGKKYIVTQAVRPTGTGNVYTEYWLTRDGTTNTNDFYRGTKSTTVTYLNGSSTAQGDNPTYSLGDYVWLDKNKNGVQDDDEKGLAGVYVTLKDSNNRELQRVTTDQSGHYQFDNLQNGTYTVEFAIPDNYTPSPANNSTNDAIDSDGERDGTRKVVVAKGTINNADNMTVDTGFYLTPKYNVGDYVWEDTNKDGIQDDNEKGISNVKVTLKNKNGDTIGTTTTDSNGKYEFTGLENGDYTIEFETPEGYTPTKQNSGSDEGKDSNGTKTTVTVKDADNKTIDSGFYKPIYNLGDYVWEDTNKDGIQDDSEKGISGVKVTLKDKNGNAIGTTTTDASGHYQFKGLENGSYTVEFETPSGYTPTKANSGQDITVDSNGITTTGIINGADNLTIDSGFYKTPKYSVGDYVWEDTNKDGIQDDNEKGISGVKVTLKDEKGNIISTTTTDENGKYQFDNLDSGNYIIHFEKPEGMTQTTANSGNDDEKDADGEDVRVTITDHDDFSIDNGYFDDDSDSDSDADSDSDSDSDSDADSDSDADSDSDSDSDSDSDSDSDSDSDSDSDSDSDSDADSDSDADSDSDSDSDSDSDSDSDSDSDSDSDSDSDSDADSDSDADSDSDADSDSDADSDSDSDSDSDADSDSDSDSDSDADSDSDSDSDSDADSDSDSDSDSDADSDSDSDSDSDADSDSDSDSDSDSDSDSDSDSDSDSDSDSDSDSDSDSDSDSDSDADSDSDSDSDSDADSDSDADSDSDSDSDSDSDSDSDADSDSDSDSDSDSDSDSDADSDSDSDSDSDAESDSDSDSDSDSDSDSDSDSDSDSDSDSDSDSDSDADSDSDSDSDSDSDSDSDSDSDSDSDSDSDADSDSYSDSDSDSDSDSDSDSDSDSDSDSDSDSDSDSDSDSDSDSDSDSDSDSDSDSDSDSDSDSDSDSDSDSDSDSDSDSDSDSDSDSDSDSDSDSDSDSDSDSDSDSDKNAKDKLPDTGANEDHDSKGTLLGTLFAGLGALLLGRRRKKDNKEK.

Residues 1–45 (MKKRRQGPINKRVDFLSNKVNKYSIRKFTVGTASILVGATLMFGA) form the signal peptide. The ligand binding A region stretch occupies residues 46–678 (ADNEAKAAED…GSSTAQGDNP (633 aa)). Residues 51–269 (KAAEDNQLES…SISTDSSVND (219 aa)) are disordered. The span at 61–74 (ASKEEQKGSRDNES) shows a compositional bias: basic and acidic residues. Polar residues-rich tracts occupy residues 85-99 (GSHS…NNAT) and 146-168 (PKTS…DNLN). Residues 175 to 184 (KESKTDEHST) show a composition bias toward basic and acidic residues. Polar residues predominate over residues 186-226 (QAQMSTNKSNLDTNDSPTQSEKTSSQANNDSTDNQSAPSKQ). Over residues 227-253 (LDSKPSEQKVYKTKFNDEPTQDVEHTT) the composition is skewed to basic and acidic residues. Over residues 255-266 (KLKTPSISTDSS) the composition is skewed to polar residues. 4 CNA-B domains span residues 679 to 797 (TYSL…YLTP), 798 to 907 (KYNV…FYKP), 908 to 1018 (IYNL…YKTP), and 1019 to 1129 (KYSV…FDDD). The tract at residues 679–1129 (TYSLGDYVWL…SIDNGYFDDD (451 aa)) is type I collagen binding region. A disordered region spans residues 862-889 (FETPEGYTPTKQNSGSDEGKDSNGTKTT). The segment at 1085 to 1608 (KPEGMTQTTA…ANEDHDSKGT (524 aa)) is disordered. Basic and acidic residues predominate over residues 1107 to 1119 (EDVRVTITDHDDF). A compositionally biased stretch (acidic residues) spans 1125 to 1584 (YFDDDSDSDS…DSDSDSDSDS (460 aa)). Basic and acidic residues predominate over residues 1585-1606 (DSDKNAKDKLPDTGANEDHDSK). An LPXTG sorting signal motif is present at residues 1594–1598 (LPDTG). At T1597 the chain carries Pentaglycyl murein peptidoglycan amidated threonine. The propeptide at 1598–1633 (GANEDHDSKGTLLGTLFAGLGALLLGRRRKKDNKEK) is removed by sortase.

The protein belongs to the serine-aspartate repeat-containing protein (SDr) family.

The protein resides in the secreted. Its subcellular location is the cell wall. In terms of biological role, binds to type I collagen via alpha-2(I) or alpha-1(I) chains. The sequence is that of Serine-aspartate repeat-containing protein F (sdrF) from Staphylococcus epidermidis (strain ATCC 12228 / FDA PCI 1200).